The sequence spans 417 residues: Serine hydroxymethyltransferase (417 aa).

(6S)-5,6,7,8-tetrahydrofolate-binding positions include Leu120 and 124–126; that span reads GHL. At Lys229 the chain carries N6-(pyridoxal phosphate)lysine.

The protein belongs to the SHMT family. As to quaternary structure, homodimer. Requires pyridoxal 5'-phosphate as cofactor.

The protein resides in the cytoplasm. The catalysed reaction is (6R)-5,10-methylene-5,6,7,8-tetrahydrofolate + glycine + H2O = (6S)-5,6,7,8-tetrahydrofolate + L-serine. Its pathway is one-carbon metabolism; tetrahydrofolate interconversion. The protein operates within amino-acid biosynthesis; glycine biosynthesis; glycine from L-serine: step 1/1. Catalyzes the reversible interconversion of serine and glycine with tetrahydrofolate (THF) serving as the one-carbon carrier. This reaction serves as the major source of one-carbon groups required for the biosynthesis of purines, thymidylate, methionine, and other important biomolecules. Also exhibits THF-independent aldolase activity toward beta-hydroxyamino acids, producing glycine and aldehydes, via a retro-aldol mechanism. The protein is Serine hydroxymethyltransferase of Anaeromyxobacter dehalogenans (strain 2CP-C).